Consider the following 297-residue polypeptide: Myoblast determination protein 1 homolog (297 aa).

The tract at residues 52–76 (KPEEHPHHHGHHHGHPHEEEHVRAP) is disordered. Residues 101-152 (DRRKAATMRERRRLSKVNEAFETLKRCTSTNPNQRLPKVEILRNAIRYIESL) enclose the bHLH domain. Disordered stretches follow at residues 171 to 221 (SGES…GKSS) and 243 to 297 (CPIL…YQVL). 2 stretches are compositionally biased toward polar residues: residues 174 to 184 (SDASSPRSNCS) and 258 to 297 (CSPQ…YQVL).

In terms of assembly, efficient DNA binding requires dimerization with another bHLH protein. Seems to form active heterodimers with ITF-2.

It is found in the nucleus. Its function is as follows. Acts as a transcriptional activator that promotes transcription of muscle-specific target genes and plays a role in muscle differentiation. Induces fibroblasts to differentiate into myoblasts. Interacts with and is inhibited by the twist protein. This interaction probably involves the basic domains of both proteins. This Coturnix japonica (Japanese quail) protein is Myoblast determination protein 1 homolog (MYOD1).